Here is a 460-residue protein sequence, read N- to C-terminus: ATP synthase subunit beta (460 aa).

Residue 148 to 155 (GGAGVGKT) participates in ATP binding.

It belongs to the ATPase alpha/beta chains family. In terms of assembly, F-type ATPases have 2 components, CF(1) - the catalytic core - and CF(0) - the membrane proton channel. CF(1) has five subunits: alpha(3), beta(3), gamma(1), delta(1), epsilon(1). CF(0) has three main subunits: a(1), b(2) and c(9-12). The alpha and beta chains form an alternating ring which encloses part of the gamma chain. CF(1) is attached to CF(0) by a central stalk formed by the gamma and epsilon chains, while a peripheral stalk is formed by the delta and b chains.

Its subcellular location is the cell inner membrane. It carries out the reaction ATP + H2O + 4 H(+)(in) = ADP + phosphate + 5 H(+)(out). Produces ATP from ADP in the presence of a proton gradient across the membrane. The catalytic sites are hosted primarily by the beta subunits. The polypeptide is ATP synthase subunit beta (Alcanivorax borkumensis (strain ATCC 700651 / DSM 11573 / NCIMB 13689 / SK2)).